Reading from the N-terminus, the 253-residue chain is MSTTNKIYFIAGGNRGIGLSLVKELSNRKGTVVFASARKPGAATKLQEWSKSHSNVHIIKLDVSSLESANEAAQEVTKVVDAVDVLWVNSAVFHSFGPVVNTPDDVWNSHYKTNVLGPIHVYQAFYPLIKKGRSKIIVFTSSLAGSMGAFFPSSQSAYGQSKAALNYTMKEISFELQDEGFIVISIHPGAVRTDSAQEIVNQHAEKKPEILDLFAKQALTPEKSASDMLKVVDNLKPENNGLFYNYDGTIIPF.

Positions 17, 36, 62, 89, 158, 162, 191, and 193 each coordinate NADP(+). Catalysis depends on tyrosine 158, which acts as the Proton donor. Lysine 162 (lowers pKa of active site Tyr) is an active-site residue.

It belongs to the short-chain dehydrogenases/reductases (SDR) family.

Its subcellular location is the cytoplasm. It localises to the nucleus. This is an uncharacterized protein from Schizosaccharomyces pombe (strain 972 / ATCC 24843) (Fission yeast).